The following is a 276-amino-acid chain: Halorhodopsin (276 aa).

A propeptide spanning residues 1–21 (MTAASTTATTMLQATQSDVLQ) is cleaved from the precursor. The Extracellular portion of the chain corresponds to 22 to 25 (EIQS). Residues 26–51 (NFLLNSSIWVNIALAGVVILLFVAMG) traverse the membrane as a helical segment. At 52–57 (RDIESP) the chain is on the cytoplasmic side. Residues 58–81 (RAKLIWVATMLVPLVSISSYAGLA) form a helical membrane-spanning segment. At 82-105 (SGLTVGFLQMPPGHALAGQEVLSP) the chain is on the extracellular side. The chain crosses the membrane as a helical span at residues 106-127 (WGRYLTWTFSTPMILLALGLLA). Over 128–130 (DTD) the chain is Cytoplasmic. Residues 131–154 (IASLFTAITMDIGMCVTGLAAALI) form a helical membrane-spanning segment. The Extracellular portion of the chain corresponds to 155–157 (TSS). A helical transmembrane segment spans residues 158 to 180 (HLLRWVFYGISCAFFVAVLYVLL). Topologically, residues 181–192 (VQWPADAEAAGT) are cytoplasmic. A helical transmembrane segment spans residues 193–216 (SEIFGTLKILTVVLWLGYPILWAL). Residues 217–225 (GSEGVALLS) lie on the Extracellular side of the membrane. The helical transmembrane segment at 226-254 (VGVTSWGYSGLDILAKYVFAFLLLRWVAA) threads the bilayer. N6-(retinylidene)lysine is present on K241. At 255 to 276 (NEGAVSGSGMSIGSGGAAPADD) the chain is on the cytoplasmic side.

This sequence belongs to the archaeal/bacterial/fungal opsin family.

Its subcellular location is the cell membrane. Functionally, light-driven chloride pump. This Halobacterium halobium (strain port) protein is Halorhodopsin (hop).